The sequence spans 334 residues: Heat-inducible transcription repressor HrcA (334 aa).

The protein belongs to the HrcA family.

Negative regulator of class I heat shock genes (grpE-dnaK-dnaJ and groELS operons). Prevents heat-shock induction of these operons. The polypeptide is Heat-inducible transcription repressor HrcA (Bordetella bronchiseptica (strain ATCC BAA-588 / NCTC 13252 / RB50) (Alcaligenes bronchisepticus)).